The chain runs to 294 residues: Farnesyl diphosphate synthase (294 aa).

Isopentenyl diphosphate is bound by residues lysine 45, arginine 48, and histidine 77. Positions 84 and 90 each coordinate Mg(2+). Arginine 95 is a binding site for (2E)-geranyl diphosphate. Arginine 96 is an isopentenyl diphosphate binding site. Residues lysine 181, threonine 182, and glutamine 220 each coordinate (2E)-geranyl diphosphate.

The protein belongs to the FPP/GGPP synthase family. The cofactor is Mg(2+).

The protein localises to the cytoplasm. It catalyses the reaction isopentenyl diphosphate + (2E)-geranyl diphosphate = (2E,6E)-farnesyl diphosphate + diphosphate. This Buchnera aphidicola subsp. Schizaphis graminum (strain Sg) protein is Farnesyl diphosphate synthase (ispA).